The primary structure comprises 321 residues: Transcription factor MYB60 (321 aa).

2 HTH myb-type domains span residues 9–65 (KVGI…RPGI) and 66–116 (KRGN…KKKI). DNA-binding regions (H-T-H motif) lie at residues 37–61 (WRSV…TNYL) and 89–112 (WAAI…NTHL). S-nitrosocysteine occurs at positions 49 and 53. 2 disordered regions span residues 196–215 (SPKA…EGSI) and 263–291 (HHQT…QKKH). Residues 206–215 (QNSSLEEGSI) are compositionally biased toward polar residues. Over residues 273–290 (SDDHDHDHEMKMDHDQKK) the composition is skewed to basic and acidic residues.

Restricted to stomatal guard cells. Mostly expressed in leaves, cotyledons, hypocotyls, seeds and ripened berry skins.

Its subcellular location is the nucleus. In terms of biological role, transcription factor involved in the regulation of gene (e.g. drought-regulated and flavonoid biosynthetic genes) expression and stomatal movements leading to negative regulation of responses to drought and responses to other physiological stimuli (e.g. light). In Vitis vinifera (Grape), this protein is Transcription factor MYB60.